A 720-amino-acid polypeptide reads, in one-letter code: Chloroplastic group IIA intron splicing facilitator CRS1, chloroplastic (720 aa).

The N-terminal 77 residues, 1-77 (MRNGINILSY…DQFRENRGVS (77 aa)), are a transit peptide targeting the chloroplast. Positions 131–159 (KAMKKIVRNVEKLDEDSDSEETQMDDLSE) form a coiled coil. CRM domains lie at 205-301 (LILD…EGQD) and 359-456 (AKLT…EVAD). Coiled-coil stretches lie at residues 447-477 (KDFL…TKRE) and 517-553 (RNLE…NMEL). Positions 570-670 (EILTNEEREC…KNYKRPSSKL (101 aa)) constitute a CRM 3 domain.

As to quaternary structure, homodimer. Interacts with RNA. Part of large ribonucleo-protein complexes that include group IIA introns and CRS1.

It localises to the plastid. Its subcellular location is the chloroplast stroma. Its function is as follows. Required for the splicing of group IIA introns in chloroplasts, by regulating the intron folding. Forms splicing particles with RNA. May also be involved in chloroplast protein translation. This is Chloroplastic group IIA intron splicing facilitator CRS1, chloroplastic from Arabidopsis thaliana (Mouse-ear cress).